Here is a 222-residue protein sequence, read N- to C-terminus: Large ribosomal subunit protein uL1 (222 aa).

Belongs to the universal ribosomal protein uL1 family. Part of the 50S ribosomal subunit.

In terms of biological role, binds directly to 23S rRNA. Probably involved in E site tRNA release. Functionally, protein L1 is also a translational repressor protein, it controls the translation of its operon by binding to its mRNA. The sequence is that of Large ribosomal subunit protein uL1 from Pyrobaculum neutrophilum (strain DSM 2338 / JCM 9278 / NBRC 100436 / V24Sta) (Thermoproteus neutrophilus).